The sequence spans 249 residues: DNA repair protein RecO (249 aa).

Belongs to the RecO family.

Its function is as follows. Involved in DNA repair and RecF pathway recombination. In Lawsonia intracellularis (strain PHE/MN1-00), this protein is DNA repair protein RecO.